An 856-amino-acid chain; its full sequence is MFWKFDLHTSSHLDTLLEKEDLSLPELLDEEDVLQECKVVNRKLLDFLLQPSHLQAMVAWVTQEPPASGEERLRYKYPSVACEILTSDVPQINDALGADESLLNRLYGFLQSGDSLNPLLASFFSKVMGILINRKTDQLVSFLRKKDDFVDLLLRHIGTSAIMDLLLRLLTCVERPQLRQDVFNWLNEEKIVQRLIEQIHPSKDDNQHSNASQSLCDIIRLSREQMIQGQDSPEPDQLLATLEKQETIEQLLSNMFEGEQCQSVIVSGIQVLLTLLEPRRPRSDSVTMNNFFSSVDGQLELLAQGALDDALSSMGALHALRPRLDRFHQLLLEPPKLEPLQMTWGSLAPPLGNTRLHVVKLLASALSANAAALTQELLVLDVPNTLLDLFFHYVFNNFLHAQVEVCVSAMLSSGPPPDSSSETPVPNPIVKHLLQHCRLVERILASWEENDRVQSGGGPRKGYMGHLTRVANAVVQNAEQGPNAEQLGQLLKELPEEQQQRWEAFVSGPLAETNKKNTVDLVNTHHLHSSSDDEDDRLKEFNFPEEAVLQQAFMDFQMQRMTSAFIDHFGFNDEEFGEQEESVNAPFDKTANITFSLNADDENPNANLLEICYKDRIQQFDDEEEEEEEGQGSAESDGEYGAWQGSQPVRASQASQPPGVRSGGSTDSEEEDEEEDEEEDEGAEQAACGRTSPSSFPSPSTQPPGPSWTATFDTVPMDAPTGPPVSKEADMSSIQIPSSPPAHGSPQLRSQDPTHPSAPQEVTDSSKVAEPLAPCQALVSVADVQATLHGMRSAPSSLDSATRDPSTSVPDFKAHQSPQTMEGKRSPEHLGLPQSQSALEMPNGSTPGGPISSGSQ.

Residues 10-403 (SSHLDTLLEK…VFNNFLHAQV (394 aa)) are interaction with PPP6C. Serine 232 is subject to Phosphoserine. Threonine 524 carries the phosphothreonine modification. A phosphoserine mark is found at serine 529, serine 530, and serine 531. Residues 621 to 630 (DDEEEEEEEG) show a composition bias toward acidic residues. Disordered regions lie at residues 621-770 (DDEE…KVAE) and 792-856 (RSAP…SGSQ). 2 positions are modified to phosphoserine: serine 633 and serine 636. Polar residues predominate over residues 644-656 (QGSQPVRASQASQ). Positions 667-683 (DSEEEDEEEDEEEDEGA) are enriched in acidic residues. A phosphoserine mark is found at serine 698 and serine 739. The segment covering 794–809 (APSSLDSATRDPSTSV) has biased composition (polar residues). Serine 826 is modified (phosphoserine). Residues 842–856 (PNGSTPGGPISSGSQ) show a composition bias toward low complexity.

It belongs to the SAPS family. In terms of assembly, protein phosphatase 6 (PP6) holoenzyme is proposed to be a heterotrimeric complex formed of the catalytic subunit, a SAPS domain-containing subunit (PP6R) and an ankyrin repeat-domain containing regulatory subunit (ARS). Interacts with PPP6C and NFKBIE. Interacts with ANKRD28, ANKRD44 and ANKRD52. Ubiquitous with highest expression in lung, spleen and bladder.

The protein resides in the cytoplasm. Its function is as follows. Regulatory subunit of protein phosphatase 6 (PP6). May function as a scaffolding PP6 subunit. Involved in the PP6-mediated dephosphorylation of NFKBIE opposing its degradation in response to TNF-alpha. The chain is Serine/threonine-protein phosphatase 6 regulatory subunit 1 (Ppp6r1) from Mus musculus (Mouse).